Consider the following 720-residue polypeptide: MAQGLEVALTDLQSSRNNVRHHTEEITVDHLLVRRGQAFNLTLYFRNRSFQPGLDNIIFVVETGPLPDLALGTRAVFSLARHHSPSPWIAWLETNGATSTEVSLCAPPTAAVGRYLLKIHIDSFQGSVTAYQLGEFILLFNPWCPEDAVYLDSEPQRQEYVMNDYGFIYQGSKNWIRPCPWNYGQFEDKIIDICLKLLDKSLHFQTDPATDCALRGSPVYVSRVVCAMINSNDDNGVLNGNWSENYTDGANPAEWTGSVAILKQWNATGCQPVRYGQCWVFAAVMCTVMRCLGIPTRVITNFDSGHDTDGNLIIDEYYDNTGRILGNKKKDTIWNFHVWNECWMARKDLPPAYGGWQVLDATPQEMSNGVYCCGPASVRAIKEGEVDLNYDTPFVFSMVNADCMSWLVQGGKEQKLHQDTSSVGNFISTKSIQSDERDDITENYKYEEGSLQERQVFLKALQKLKARSFHGSQRGAELQPSRPTSLSQDSPRSLHTPSLRPSDVVQVSLKFKLLDPPNMGQDICFVLLALNMSSQFKDLKVNLSAQSLLHDGSPLSPFWQDTAFITLSPKEAKTYPCKISYSQYSQYLSTDKLIRISALGEEKSSPEKILVNKIITLSYPSITINVLGAAVVNQPLSIQVIFSNPLSEQVEDCVLTVEGSGLFKKQQKVFLGVLKPQHQASIILETVPFKSGQRQIQANMRSNKFKDIKGYRNVYVDFAL.

Residue Ala-2 is modified to N-acetylalanine. Residues Cys-278, His-337, and Asp-360 contribute to the active site. 4 residues coordinate Ca(2+): Asn-400, Asp-402, Glu-448, and Glu-453. Positions 470–499 (HGSQRGAELQPSRPTSLSQDSPRSLHTPSL) are disordered. Residues 481 to 496 (SRPTSLSQDSPRSLHT) are compositionally biased toward polar residues.

Belongs to the transglutaminase superfamily. Transglutaminase family. Ca(2+) serves as cofactor. As to expression, expressed in foreskin keratinocytes.

It is found in the cytoplasm. The catalysed reaction is L-glutaminyl-[protein] + L-lysyl-[protein] = [protein]-L-lysyl-N(6)-5-L-glutamyl-[protein] + NH4(+). Its function is as follows. Catalyzes the cross-linking of proteins and the conjugation of polyamines to proteins. Contributes to the formation of the cornified cell envelope of keratinocytes. The polypeptide is Protein-glutamine gamma-glutamyltransferase 5 (TGM5) (Homo sapiens (Human)).